Here is a 268-residue protein sequence, read N- to C-terminus: Lectin ESA-2 (268 aa).

Tandem repeats lie at residues 1 to 67 (GRYT…RRGE), 68 to 135 (SNVY…QSGG), 136 to 202 (DTYN…LSGA), and 203 to 268 (NNYS…VATS). The tract at residues 1–268 (GRYTVQNQWG…PIGFKGVATS (268 aa)) is 4 X approximate tandem repeats.

As to quaternary structure, monomer.

In terms of biological role, lectin specific for high mannose N-glycans, recognizes the branched moiety of these glycans. Does not recognize other types of N-glycans or monosaccharides. Agglutinates trypsin-treated sheep and rabbit erythrocytes and untreated sheep erythrocytes. Has mitogenic activity on mouse lymphocytes. Does not require metal ions for activity. This chain is Lectin ESA-2, found in Eucheuma serra (Marine red alga).